We begin with the raw amino-acid sequence, 396 residues long: Protein Njmu-R1 (396 aa).

The disordered stretch occupies residues M1–A78. A phosphoserine mark is found at S8 and S18. The span at M9 to S24 shows a compositional bias: acidic residues. Residues G58–T67 are compositionally biased toward polar residues.

In terms of assembly, component of the complex WDR11 composed of C17orf75, FAM91A1 and WDR11; FAM91A1 and WDR11 are required for proper location of the complex. Interacts with TBC1D23; this interaction may be indirect and recruits TBC1D23 to AP-1-derived vesicles. Highly expressed in testis and also expressed in fetal testis.

It localises to the golgi apparatus. Its subcellular location is the trans-Golgi network. The protein resides in the cytoplasmic vesicle. In terms of biological role, as component of the WDR11 complex acts together with TBC1D23 to facilitate the golgin-mediated capture of vesicles generated using AP-1. May have a role in spermatogenesis. The protein is Protein Njmu-R1 (C17orf75) of Homo sapiens (Human).